The primary structure comprises 160 residues: Transcriptional regulator MraZ (160 aa).

2 SpoVT-AbrB domains span residues Thr-5 to Leu-51 and Met-80 to Ala-123.

It belongs to the MraZ family. Forms oligomers.

The protein resides in the cytoplasm. It is found in the nucleoid. The polypeptide is Transcriptional regulator MraZ (Phenylobacterium zucineum (strain HLK1)).